A 219-amino-acid polypeptide reads, in one-letter code: Response regulator ArlR (219 aa).

One can recognise a Response regulatory domain in the interval 3-116 (NILIVEDEQN…ELLARIRAVL (114 aa)). D52 carries the post-translational modification 4-aspartylphosphate. The ompR/PhoB-type DNA-binding region spans 122 to 219 (KDVLDINGII…TVRGVGYVIR (98 aa)).

Post-translationally, phosphorylated by ArlS.

Its subcellular location is the cytoplasm. Functionally, member of the two-component regulatory system ArlS/ArlR. The chain is Response regulator ArlR (arlR) from Staphylococcus epidermidis (strain ATCC 35984 / DSM 28319 / BCRC 17069 / CCUG 31568 / BM 3577 / RP62A).